We begin with the raw amino-acid sequence, 110 residues long: MHNEKGKNGDEYRHDAFIMPKMRSKLQKPKLYRVLLLDDDYTPMDFVIFVLKSFFKKNFEEAMHIMLSVHQNGVGECGIYNYEVAEMKIIQVRECARQNEHPLQCVMEWK.

This sequence belongs to the ClpS family. Binds to the N-terminal domain of the chaperone ClpA.

Functionally, involved in the modulation of the specificity of the ClpAP-mediated ATP-dependent protein degradation. This chain is ATP-dependent Clp protease adapter protein ClpS, found in Bartonella henselae (strain ATCC 49882 / DSM 28221 / CCUG 30454 / Houston 1) (Rochalimaea henselae).